The following is a 450-amino-acid chain: Molybdate-anion transporter (450 aa).

12 helical membrane passes run 1–21, 43–63, 79–99, 128–148, 174–194, 195–215, 249–269, 278–298, 311–331, 344–364, 376–396, and 409–429; these read MLVT…GLEL, LDFY…APYL, ILYV…SSLV, FVLL…FSAF, AAFW…AVAS, WIGL…ALAG, VLLL…FVFL, GAPL…GSSL, PMHL…MLTF, FIAF…MSFL, GVLN…LLVL, and FSIC…LFTV.

Belongs to the major facilitator superfamily.

It is found in the cell membrane. In terms of biological role, mediates high-affinity intracellular uptake of the rare oligo-element molybdenum. The polypeptide is Molybdate-anion transporter (MFSD5) (Pongo abelii (Sumatran orangutan)).